We begin with the raw amino-acid sequence, 339 residues long: Outer membrane protein assembly factor BamC (339 aa).

Positions 1–19 (MKFSRQLVLGSLAVLVLSA) are cleaved as a signal peptide. Cys20 carries N-palmitoyl cysteine lipidation. Residue Cys20 is the site of S-diacylglycerol cysteine attachment.

The protein belongs to the BamC family. As to quaternary structure, part of the Bam complex.

It is found in the cell outer membrane. Functionally, part of the outer membrane protein assembly complex, which is involved in assembly and insertion of beta-barrel proteins into the outer membrane. This Vibrio cholerae serotype O1 (strain ATCC 39315 / El Tor Inaba N16961) protein is Outer membrane protein assembly factor BamC.